The sequence spans 356 residues: Putative mitogen-activated protein kinase 14C (356 aa).

The region spanning 20–305 is the Protein kinase domain; that stretch reads YEFVRFLGGG…AAEAMLHPYL (286 aa). ATP-binding positions include 26–34 and K49; that span reads LGGGSFGQV. D147 (proton acceptor) is an active-site residue. T177 is modified (phosphothreonine).

The protein belongs to the protein kinase superfamily. CMGC Ser/Thr protein kinase family. MAP kinase subfamily. Mg(2+) is required as a cofactor. Post-translationally, the phosphorylation on Thr-177 activates the enzyme. A conserved Tyr, which must also be phosphorylated to activate the enzyme in closely related sequences, is replaced by His-179 in this sequence.

The enzyme catalyses L-seryl-[protein] + ATP = O-phospho-L-seryl-[protein] + ADP + H(+). The catalysed reaction is L-threonyl-[protein] + ATP = O-phospho-L-threonyl-[protein] + ADP + H(+). In terms of biological role, kinase involved in a signal transduction pathway. The polypeptide is Putative mitogen-activated protein kinase 14C (p38c) (Drosophila melanogaster (Fruit fly)).